Consider the following 338-residue polypeptide: Elongation factor Ts, mitochondrial (338 aa).

The N-terminal 55 residues, 1–55, are a transit peptide targeting the mitochondrion; it reads MSLLRSLRLCLVARTGSCPLSALGPGPLLPSLQAGLPLLQSPQQWHTFHSGSWLS. An N6-succinyllysine mark is found at Lys89, Lys146, and Lys205. The residue at position 283 (Ser283) is a Phosphoserine.

The protein belongs to the EF-Ts family.

It localises to the mitochondrion. Functionally, associates with the EF-Tu.GDP complex and induces the exchange of GDP to GTP. It remains bound to the aminoacyl-tRNA.EF-Tu.GTP complex up to the GTP hydrolysis stage on the ribosome. This chain is Elongation factor Ts, mitochondrial, found in Bos taurus (Bovine).